The sequence spans 376 residues: 4-hydroxy-3-methylbut-2-enyl diphosphate reductase (376 aa).

[4Fe-4S] cluster is bound at residue C19. Residues H48 and H99 each coordinate (2E)-4-hydroxy-3-methylbut-2-enyl diphosphate. 2 residues coordinate dimethylallyl diphosphate: H48 and H99. Isopentenyl diphosphate is bound by residues H48 and H99. C121 serves as a coordination point for [4Fe-4S] cluster. H149 is a binding site for (2E)-4-hydroxy-3-methylbut-2-enyl diphosphate. H149 contacts dimethylallyl diphosphate. Residue H149 participates in isopentenyl diphosphate binding. Residue E151 is the Proton donor of the active site. Residue T208 coordinates (2E)-4-hydroxy-3-methylbut-2-enyl diphosphate. [4Fe-4S] cluster is bound at residue C236. (2E)-4-hydroxy-3-methylbut-2-enyl diphosphate-binding residues include S264, N266, and S307. Dimethylallyl diphosphate contacts are provided by S264, N266, and S307. Positions 264, 266, and 307 each coordinate isopentenyl diphosphate.

The protein belongs to the IspH family. Requires [4Fe-4S] cluster as cofactor.

It catalyses the reaction isopentenyl diphosphate + 2 oxidized [2Fe-2S]-[ferredoxin] + H2O = (2E)-4-hydroxy-3-methylbut-2-enyl diphosphate + 2 reduced [2Fe-2S]-[ferredoxin] + 2 H(+). It carries out the reaction dimethylallyl diphosphate + 2 oxidized [2Fe-2S]-[ferredoxin] + H2O = (2E)-4-hydroxy-3-methylbut-2-enyl diphosphate + 2 reduced [2Fe-2S]-[ferredoxin] + 2 H(+). It functions in the pathway isoprenoid biosynthesis; dimethylallyl diphosphate biosynthesis; dimethylallyl diphosphate from (2E)-4-hydroxy-3-methylbutenyl diphosphate: step 1/1. Its pathway is isoprenoid biosynthesis; isopentenyl diphosphate biosynthesis via DXP pathway; isopentenyl diphosphate from 1-deoxy-D-xylulose 5-phosphate: step 6/6. Its function is as follows. Catalyzes the conversion of 1-hydroxy-2-methyl-2-(E)-butenyl 4-diphosphate (HMBPP) into a mixture of isopentenyl diphosphate (IPP) and dimethylallyl diphosphate (DMAPP). Acts in the terminal step of the DOXP/MEP pathway for isoprenoid precursor biosynthesis. The polypeptide is 4-hydroxy-3-methylbut-2-enyl diphosphate reductase (Treponema pallidum (strain Nichols)).